Consider the following 537-residue polypeptide: Leucine-rich repeat LGI family member 4 (537 aa).

Positions 1-19 (MGGAGILLLLLAGAGVVVA) are cleaved as a signal peptide. 4 LRR repeats span residues 53 to 74 (TLLSLSLVRTGVTQLKAGSFLR), 77 to 98 (SLHLLLFTSNSFSVIEDDAFAG), 101 to 122 (HLQYLFIEDNEIGSISKNALRG), and 125 to 146 (SLTHLSLANNHLETLPRFLFRG). Residues 158–208 (NPFQCDCRVLWLLQWMPTVNASVGTGACAGPASLSHMQLHHLDPKTFKCRA) enclose the LRRCT domain. Residue Asn-177 is glycosylated (N-linked (GlcNAc...) asparagine). EAR repeat units lie at residues 210-252 (ELSW…SWDY), 256-298 (RFRP…ARPS), 302-349 (RLAP…CRDG), 351-394 (GFYP…HWTG), 396-439 (RFER…RWDG), 441-483 (MFRL…RLEP), and 487-532 (LLEP…QHHE).

In terms of assembly, can bind to ADAM11, ADAM22 and ADAM23. As to expression, widely expressed, with highest expression in brain.

The protein resides in the secreted. In terms of biological role, component of Schwann cell signaling pathway(s) that controls axon segregation and myelin formation. The protein is Leucine-rich repeat LGI family member 4 (LGI4) of Homo sapiens (Human).